The sequence spans 607 residues: UvrABC system protein C (607 aa).

In terms of domain architecture, GIY-YIG spans 15–93 (RKPGVYRMLD…IKELKPPYNI (79 aa)). Residues 203–238 (REVADQLSTDMEAAAAALEFEKAALLRDQLAAIQAV) form the UVR domain. The segment covering 542–551 (HRARRGKARK) has biased composition (basic residues). The interval 542–561 (HRARRGKARKQSTLDEIPGI) is disordered.

Belongs to the UvrC family. As to quaternary structure, interacts with UvrB in an incision complex.

The protein resides in the cytoplasm. Functionally, the UvrABC repair system catalyzes the recognition and processing of DNA lesions. UvrC both incises the 5' and 3' sides of the lesion. The N-terminal half is responsible for the 3' incision and the C-terminal half is responsible for the 5' incision. This Alcanivorax borkumensis (strain ATCC 700651 / DSM 11573 / NCIMB 13689 / SK2) protein is UvrABC system protein C.